The primary structure comprises 566 residues: Class II hydrophobin FOXG_02748 (566 aa).

The first 22 residues, methionine 1–alanine 22, serve as a signal peptide directing secretion. 4 disulfide bridges follow: cysteine 497–cysteine 546, cysteine 507–cysteine 537, cysteine 508–cysteine 520, and cysteine 547–cysteine 558.

It belongs to the cerato-ulmin hydrophobin family. In terms of assembly, homodimer. Homodimers further self-assemble to form highly ordered films at water-air interfaces through intermolecular interactions.

It localises to the secreted. It is found in the cell wall. Functionally, aerial growth, conidiation, and dispersal of filamentous fungi in the environment rely upon a capability of their secreting small amphipathic proteins called hydrophobins (HPBs) with low sequence identity. Class I can self-assemble into an outermost layer of rodlet bundles on aerial cell surfaces, conferring cellular hydrophobicity that supports fungal growth, development and dispersal; whereas Class II form highly ordered films at water-air interfaces through intermolecular interactions but contribute nothing to the rodlet structure. FOXG_02748 is a class II hydrophobin that is likely required for plant colonization. This is Class II hydrophobin FOXG_02748 from Fusarium oxysporum f. sp. lycopersici (strain 4287 / CBS 123668 / FGSC 9935 / NRRL 34936) (Fusarium vascular wilt of tomato).